Reading from the N-terminus, the 186-residue chain is Large ribosomal subunit protein uL5 (186 aa).

This sequence belongs to the universal ribosomal protein uL5 family. As to quaternary structure, part of the 50S ribosomal subunit; part of the 5S rRNA/L5/L18/L25 subcomplex. Contacts the 5S rRNA and the P site tRNA. Forms a bridge to the 30S subunit in the 70S ribosome.

This is one of the proteins that bind and probably mediate the attachment of the 5S RNA into the large ribosomal subunit, where it forms part of the central protuberance. In the 70S ribosome it contacts protein S13 of the 30S subunit (bridge B1b), connecting the 2 subunits; this bridge is implicated in subunit movement. Contacts the P site tRNA; the 5S rRNA and some of its associated proteins might help stabilize positioning of ribosome-bound tRNAs. This Mycoplasmopsis synoviae (strain 53) (Mycoplasma synoviae) protein is Large ribosomal subunit protein uL5.